Here is a 244-residue protein sequence, read N- to C-terminus: Mitochondrial import inner membrane translocase subunit Tim21 (244 aa).

Residues 1–18 (MICTLLRAVRCTERLHGC) constitute a mitochondrion transit peptide. A disordered region spans residues 69-89 (VRSPQSAKEDGSKQVSVHRSQ). The chain crosses the membrane as a helical span at residues 108–128 (FTYLIVVLIGISITGGLFYTI).

It belongs to the TIM21 family. As to quaternary structure, component of the TIM23 complex. Component of the MITRAC (mitochondrial translation regulation assembly intermediate of cytochrome c oxidase complex) complex, the core components of this complex being COA3/MITRAC12 and COX14. Interacts with COA3 and MT-CO1/COX1.

The protein resides in the mitochondrion membrane. Participates in the translocation of transit peptide-containing proteins across the mitochondrial inner membrane. Also required for assembly of mitochondrial respiratory chain complex I and complex IV as component of the MITRAC (mitochondrial translation regulation assembly intermediate of cytochrome c oxidase complex) complex. Probably shuttles between the presequence translocase and respiratory-chain assembly intermediates in a process that promotes incorporation of early nuclear-encoded subunits into these complexes. This chain is Mitochondrial import inner membrane translocase subunit Tim21 (TIMM21), found in Bos taurus (Bovine).